The chain runs to 1657 residues: Thrombospondin type-1 domain-containing protein 7A (1657 aa).

An N-terminal signal peptide occupies residues 1–47 (MGLQARRWASGSRGAAGPRRGVLQLLPLPLPLPLLLLLLLRPGAGRA). Residues 48 to 1607 (AAQGEAEAPT…FGPDGRLKTW (1560 aa)) lie on the Extracellular side of the membrane. 3 TSP type-1 domains span residues 57-116 (TLYL…KVCD), 120-192 (ELYD…IPCQ), and 194-247 (DCIV…SPCE). N-linked (GlcNAc...) asparagine glycosylation is present at Asn234. The tract at residues 265–311 (MPHSRQVRQARRRGKNKEREKDRSKGVKDPEARELIKKKRNRNRQNR) is disordered. The stretch at 267–315 (HSRQVRQARRRGKNKEREKDRSKGVKDPEARELIKKKRNRNRQNRQENK) forms a coiled coil. Residues 269–280 (RQVRQARRRGKN) are compositionally biased toward basic residues. The segment covering 281–299 (KEREKDRSKGVKDPEAREL) has biased composition (basic and acidic residues). Residues 300–309 (IKKKRNRNRQ) show a composition bias toward basic residues. The N-linked (GlcNAc...) asparagine glycan is linked to Asn332. TSP type-1 domains lie at 360–416 (ECQV…LSQG), 423–510 (ATYG…IPCP), 512–574 (ECEV…PACY), 634–695 (DCVL…HPCT), 696–769 (VYHW…LPCK), 771–831 (DCIV…QACQ), 832–904 (SYRW…IPCQ), 906–959 (DCQL…CPCD), 960–1033 (KYNA…IPCP), 1035–1095 (DCKL…SDCN), 1096–1163 (QYLW…LPCP), 1166–1220 (CVIS…KNCY), 1221–1284 (HYDY…VECP), 1286–1341 (NCQL…KPCY), 1342–1412 (RWQY…QPCP), and 1414–1475 (DCYL…GQCY). 3 disulfide bridges follow: Cys435/Cys505, Cys455/Cys509, and Cys466/Cys494. The N-linked (GlcNAc...) asparagine glycan is linked to Asn450. Asn500 carries N-linked (GlcNAc...) asparagine glycosylation. 2 cysteine pairs are disulfide-bonded: Cys635–Cys677 and Cys646–Cys650. Asn679 carries an N-linked (GlcNAc...) asparagine glycan. Cystine bridges form between Cys689-Cys694, Cys707-Cys764, Cys728-Cys768, Cys739-Cys752, Cys772-Cys814, Cys783-Cys787, and Cys824-Cys830. Asn717 carries an N-linked (GlcNAc...) asparagine glycan. Asn968 is a glycosylation site (N-linked (GlcNAc...) asparagine). 6 disulfides stabilise this stretch: Cys972–Cys1028, Cys994–Cys1032, Cys1005–Cys1018, Cys1036–Cys1073, Cys1047–Cys1051, and Cys1090–Cys1094. N-linked (GlcNAc...) asparagine glycosylation occurs at Asn1043. An N-linked (GlcNAc...) asparagine glycan is attached at Asn1182. A disulfide bridge connects residues Cys1213 and Cys1219. A glycan (N-linked (GlcNAc...) asparagine) is linked at Asn1225. Cystine bridges form between Cys1232–Cys1279, Cys1240–Cys1283, Cys1251–Cys1264, Cys1287–Cys1325, Cys1298–Cys1302, Cys1335–Cys1340, Cys1351–Cys1407, Cys1358–Cys1411, Cys1369–Cys1388, Cys1415–Cys1459, Cys1426–Cys1430, and Cys1469–Cys1474. N-linked (GlcNAc...) asparagine glycosylation occurs at Asn1276. An N-linked (GlcNAc...) asparagine glycan is attached at Asn1366. N-linked (GlcNAc...) asparagine glycans are attached at residues Asn1500 and Asn1547. The tract at residues 1570–1591 (DVKTSRAVHPTQPSSNPAGRGR) is disordered. The helical transmembrane segment at 1608–1628 (VYGVAAGAFVLLIFIVSMIYL) threads the bilayer. Residues 1629–1657 (ACKKPKKPQRRQNNRLKPLTLAYDGDADM) lie on the Cytoplasmic side of the membrane.

In terms of processing, proteolytic cleavage in the extracellular region generates a 210 kDa soluble form. Post-translationally, extensively N-glycosylated. As to expression, detected on kidney podocytes along the glomerular capillary wall (at protein level).

It localises to the cell membrane. It is found in the cell projection. Its subcellular location is the secreted. In terms of biological role, plays a role in actin cytoskeleton rearrangement. Functionally, the soluble form promotes endothelial cell migration and filopodia formation during sprouting angiogenesis via a FAK-dependent mechanism. The chain is Thrombospondin type-1 domain-containing protein 7A (THSD7A) from Homo sapiens (Human).